The primary structure comprises 446 residues: tRNA (guanine-N(7)-)-methyltransferase non-catalytic subunit TRM82 (446 aa).

Residues Leu67–Lys97 form a disordered region. Low complexity predominate over residues Ser87–Lys97. WD repeat units lie at residues Pro107–Cys147, Gly202–His243, and Gly247–Lys287.

This sequence belongs to the WD repeat TRM82 family. In terms of assembly, forms a heterodimer with the catalytic subunit TRM8.

The protein localises to the nucleus. Its pathway is tRNA modification; N(7)-methylguanine-tRNA biosynthesis. Required for the formation of N(7)-methylguanine at position 46 (m7G46) in tRNA. In the complex, it is required to stabilize and induce conformational changes of the catalytic subunit. This is tRNA (guanine-N(7)-)-methyltransferase non-catalytic subunit TRM82 from Debaryomyces hansenii (strain ATCC 36239 / CBS 767 / BCRC 21394 / JCM 1990 / NBRC 0083 / IGC 2968) (Yeast).